The chain runs to 447 residues: ATP-dependent protease ATPase subunit HslU (447 aa).

ATP contacts are provided by residues Ile-18, 60-65 (GVGKTE), Asp-259, Glu-325, and Arg-397.

It belongs to the ClpX chaperone family. HslU subfamily. In terms of assembly, a double ring-shaped homohexamer of HslV is capped on each side by a ring-shaped HslU homohexamer. The assembly of the HslU/HslV complex is dependent on binding of ATP.

The protein resides in the cytoplasm. In terms of biological role, ATPase subunit of a proteasome-like degradation complex; this subunit has chaperone activity. The binding of ATP and its subsequent hydrolysis by HslU are essential for unfolding of protein substrates subsequently hydrolyzed by HslV. HslU recognizes the N-terminal part of its protein substrates and unfolds these before they are guided to HslV for hydrolysis. In Burkholderia ambifaria (strain ATCC BAA-244 / DSM 16087 / CCUG 44356 / LMG 19182 / AMMD) (Burkholderia cepacia (strain AMMD)), this protein is ATP-dependent protease ATPase subunit HslU.